We begin with the raw amino-acid sequence, 413 residues long: Serine hydroxymethyltransferase (413 aa).

Residues leucine 117 and 121–123 (GHL) contribute to the (6S)-5,6,7,8-tetrahydrofolate site. The residue at position 226 (lysine 226) is an N6-(pyridoxal phosphate)lysine. Residues glutamate 239 and 349 to 351 (SPF) contribute to the (6S)-5,6,7,8-tetrahydrofolate site.

Belongs to the SHMT family. Homodimer. It depends on pyridoxal 5'-phosphate as a cofactor.

The protein localises to the cytoplasm. It catalyses the reaction (6R)-5,10-methylene-5,6,7,8-tetrahydrofolate + glycine + H2O = (6S)-5,6,7,8-tetrahydrofolate + L-serine. Its pathway is one-carbon metabolism; tetrahydrofolate interconversion. It functions in the pathway amino-acid biosynthesis; glycine biosynthesis; glycine from L-serine: step 1/1. Catalyzes the reversible interconversion of serine and glycine with tetrahydrofolate (THF) serving as the one-carbon carrier. This reaction serves as the major source of one-carbon groups required for the biosynthesis of purines, thymidylate, methionine, and other important biomolecules. Also exhibits THF-independent aldolase activity toward beta-hydroxyamino acids, producing glycine and aldehydes, via a retro-aldol mechanism. The chain is Serine hydroxymethyltransferase from Bacillus cereus (strain AH187).